A 150-amino-acid polypeptide reads, in one-letter code: Deoxyuridine 5'-triphosphate nucleotidohydrolase (150 aa).

Residues 65-67, asparagine 78, and 82-84 contribute to the substrate site; these read RSG and TID. The interval 130 to 150 is disordered; that stretch reads LSDTERGEGGFGHTGVASKAE.

Belongs to the dUTPase family. The cofactor is Mg(2+).

It catalyses the reaction dUTP + H2O = dUMP + diphosphate + H(+). It participates in pyrimidine metabolism; dUMP biosynthesis; dUMP from dCTP (dUTP route): step 2/2. This enzyme is involved in nucleotide metabolism: it produces dUMP, the immediate precursor of thymidine nucleotides and it decreases the intracellular concentration of dUTP so that uracil cannot be incorporated into DNA. This chain is Deoxyuridine 5'-triphosphate nucleotidohydrolase, found in Chlorobaculum parvum (strain DSM 263 / NCIMB 8327) (Chlorobium vibrioforme subsp. thiosulfatophilum).